Reading from the N-terminus, the 201-residue chain is ATP-dependent dethiobiotin synthetase BioD (201 aa).

Aspartate 11–histidine 16 provides a ligand contact to ATP. A Mg(2+)-binding site is contributed by threonine 15. Lysine 31 is an active-site residue. ATP-binding positions include aspartate 40 and glutamate 93–glycine 96. The Mg(2+) site is built by aspartate 40 and glutamate 93.

Belongs to the dethiobiotin synthetase family. Homodimer. Mg(2+) serves as cofactor.

Its subcellular location is the cytoplasm. It carries out the reaction (7R,8S)-7,8-diammoniononanoate + CO2 + ATP = (4R,5S)-dethiobiotin + ADP + phosphate + 3 H(+). It functions in the pathway cofactor biosynthesis; biotin biosynthesis; biotin from 7,8-diaminononanoate: step 1/2. In terms of biological role, catalyzes a mechanistically unusual reaction, the ATP-dependent insertion of CO2 between the N7 and N8 nitrogen atoms of 7,8-diaminopelargonic acid (DAPA, also called 7,8-diammoniononanoate) to form a ureido ring. This chain is ATP-dependent dethiobiotin synthetase BioD, found in Campylobacter jejuni subsp. jejuni serotype O:6 (strain 81116 / NCTC 11828).